A 71-amino-acid polypeptide reads, in one-letter code: MPSALESRLIDLESRLTHQEAMVDDLSDVIAAQDRTIARLVVQIRHLAGALRDVELGSIGSPADDKPPPHY.

This sequence belongs to the SlyX family.

In Rhodospirillum rubrum (strain ATCC 11170 / ATH 1.1.1 / DSM 467 / LMG 4362 / NCIMB 8255 / S1), this protein is Protein SlyX homolog.